We begin with the raw amino-acid sequence, 594 residues long: Insulin-like growth factor 2 mRNA-binding protein 3-A (594 aa).

2 RRM domains span residues 2-75 and 81-156; these read NKLY…HSVP and RKLQ…YIPD. Over residues 161–177 the composition is skewed to low complexity; that stretch reads PQAPSQQLQQQPQQQHP. Positions 161 to 206 are disordered; sequence PQAPSQQLQQQPQQQHPQGRRGFGQRGPARQGSPGAAARPKPQTEV. KH domains follow at residues 205–270 and 286–353; these read EVPL…CKII and EIPL…EEEI. Residues 392-415 form a disordered region; that stretch reads GMPPPSVGVPSPTSSTSYPPFGQQ. Over residues 399–411 the composition is skewed to low complexity; that stretch reads GVPSPTSSTSYPP. 2 consecutive KH domains span residues 418 to 483 and 500 to 566; these read SETV…QGRI and KLET…QRKI.

The protein belongs to the RRM IMP/VICKZ family. As to quaternary structure, homodimer and multimer. Associates with microtubules. Interaction with a translocation machinery protein TRAPA of the endoplasmic reticulum. Component of a mRNP complex, at least composed of DAZAP1, IGF2BP3, STAU and VgRBP60. The mRNP complex with DAZAP1, IGF2BP3, STAU and VgRBP60 is only found in the cytoplasm. Interacts with a hnRNP 1 related RNA transport protein VgRBP60 both in the nucleus (in a RNA-independent manner) and the cytoplasm (in a RNA-dependent manner). Found in a B3 activator complex.

It is found in the nucleus. It localises to the cytoplasm. The protein resides in the endoplasmic reticulum. In terms of biological role, RNA-binding protein that acts as a regulator of mRNA transport and localization. Binds to the RNA sequence motif 5'-UUCAC-3'. Preferentially binds to N6-methyladenosine (m6A)-containing mRNAs and increases their stability. Mediates the specific association of Vg1 RNA to microtubules. Binds specifically to the vegetal localization elements (VLE or VgLE) in the 3'-UTR of Vg1 and VegT mRNAs. Binds to the Vg1 and VegT mRNAs in both the nucleus and the cytoplasm. May regulate mRNA translation. Acts as a transcription regulator. Binds to the 5'-[TA]GGTTACT-3' motif within element 3 of the TFIIIA gene promoter. The chain is Insulin-like growth factor 2 mRNA-binding protein 3-A (igf2bp3-a) from Xenopus laevis (African clawed frog).